Consider the following 2382-residue polypeptide: Nonribosomal peptide synthetase chyA (2382 aa).

The tract at residues 204–607 is adenylation 1; sequence QKCATQPESI…LGRKDHQVKI (404 aa). The Carrier 1 domain maps to 745 to 821; it reads TPTTQNQRIL…DMASVLVKDH (77 aa). Ser-782 carries the post-translational modification O-(pantetheine 4'-phosphoryl)serine. The condensation 1 stretch occupies residues 857–1269; the sequence is EDVYPCTHMQ…LVPPEDMATL (413 aa). The adenylation 2 stretch occupies residues 1294-1687; the sequence is GQPDTLAIHS…VGRKDDQVKL (394 aa). The Carrier 2 domain maps to 1833–1909; that stretch reads VPVSIHGRKV…GLSLKCATEN (77 aa). Residue Ser-1870 is modified to O-(pantetheine 4'-phosphoryl)serine. Residues 1967 to 2373 are condensation 2; sequence MTLHNFYSRY…FSDVIESLAS (407 aa).

This sequence belongs to the NRP synthetase family.

It participates in pigment biosynthesis. Nonribosomal peptide synthetase; part of the gene cluster that mediates the biosynthesis of the yellow pigment chrysogine. the NRPS chyA mediates the condensation of anthranilic acid and alanine into the intermediate 2-(2-aminopropanamido)benzoic acid. The remainder of the pathway is highly branched yielding at least 13 chrysogine-related compounds. The malonyl transferase chyE converts 2-(2-aminopropanamido)benzoic acid and 2-(2-aminopropanamido)benzamidine into 2-(2-(2-carboxyacetamido)propanamido)benzoic acid and 3-((1-((2-carbamoylphenyl)amino)-1-oxopropan-2-yl)amino)-3-oxopropanoic acid, respectively. ChyD is an amidase, being responsible for the amidation of the carboxylic acid moiety of 2-(2-aminopropanamido)benzoic acid, 2-(2-(2-carboxyacetamido)propanamido)benzoic acid and 2-(2-((4-amino-1-carboxy-4-oxobutyl)amino)propanamido)benzoic acid. ChyC is involved in the same reactions as ChyD, but plays a more minor role in the amidation reactions compared to chyD. The oxidoreductases chyH and chyM are involved in oxidation reactions that form N-pyruvoylanthranilamide from 2-(2-aminopropanamido)benzamidine and (1-((2-carbamoylphenyl)amino)-1-oxopropan-2-yl)glutamine, respectively. N-pyruvoylanthranilamide is further converted via two further branches in the pathway, yielding chrysogine and additional chrysogine-related coumpounds. Chrysogine is likely formed by a spontaneous ring closure from N-pyruvoylanthranilamide. This is Nonribosomal peptide synthetase chyA from Penicillium rubens (strain ATCC 28089 / DSM 1075 / NRRL 1951 / Wisconsin 54-1255) (Penicillium chrysogenum).